Reading from the N-terminus, the 388-residue chain is ATP phosphoribosyltransferase regulatory subunit (388 aa).

The protein belongs to the class-II aminoacyl-tRNA synthetase family. HisZ subfamily. Heteromultimer composed of HisG and HisZ subunits.

The protein localises to the cytoplasm. Its pathway is amino-acid biosynthesis; L-histidine biosynthesis; L-histidine from 5-phospho-alpha-D-ribose 1-diphosphate: step 1/9. Required for the first step of histidine biosynthesis. May allow the feedback regulation of ATP phosphoribosyltransferase activity by histidine. The sequence is that of ATP phosphoribosyltransferase regulatory subunit from Acinetobacter baumannii (strain AB307-0294).